A 201-amino-acid polypeptide reads, in one-letter code: Sorting nexin-10 (201 aa).

The required for interaction with ATP6V1D stretch occupies residues 8–125 (EEFVSVWVRD…SLHLFLQSHL (118 aa)). Positions 10 to 127 (FVSVWVRDPR…HLFLQSHLNS (118 aa)) constitute a PX domain. Residues Arg53, Lys79, and Arg94 each coordinate a 1,2-diacyl-sn-glycero-3-phospho-(1D-myo-inositol-3-phosphate). The disordered stretch occupies residues 155–201 (RFPEEEEEGKKDADVEYDSESSSSGLGHSSDDSSSHGCKTSPALQES).

Belongs to the sorting nexin family. Interacts with ATP6V1D; may play a role in ciliogenesis. In terms of tissue distribution, expressed in femur, calvariae and teeth.

It is found in the cytoplasm. It localises to the endosome membrane. The protein localises to the cytoskeleton. Its subcellular location is the microtubule organizing center. The protein resides in the centrosome. Probable phosphoinositide-binding protein involved in protein sorting and membrane trafficking in endosomes. Plays a role in cilium biogenesis through regulation of the transport and the localization of proteins to the cilium. Required for the localization to the cilium of V-ATPase subunit ATP6V1D and ATP6V0D1, and RAB8A. Involved in osteoclast differentiation and therefore bone resorption. The sequence is that of Sorting nexin-10 (Snx10) from Mus musculus (Mouse).